The sequence spans 463 residues: uncharacterized protein (463 aa).

This sequence belongs to the mycobacterial PPE family.

This is an uncharacterized protein from Mycobacterium tuberculosis (strain ATCC 25618 / H37Rv).